Consider the following 178-residue polypeptide: Small ribosomal subunit protein uS4 (178 aa).

Residues 104–166 (RRLQTIVYRK…PNSPMASENH (63 aa)) form the S4 RNA-binding domain. The tract at residues 158–178 (NSPMASENHPERTAAVSEENQ) is disordered.

Belongs to the universal ribosomal protein uS4 family. In terms of assembly, part of the 30S ribosomal subunit. Contacts protein S5. The interaction surface between S4 and S5 is involved in control of translational fidelity.

One of the primary rRNA binding proteins, it binds directly to 16S rRNA where it nucleates assembly of the body of the 30S subunit. Its function is as follows. With S5 and S12 plays an important role in translational accuracy. This Methanococcus maripaludis (strain C5 / ATCC BAA-1333) protein is Small ribosomal subunit protein uS4.